The sequence spans 180 residues: MEAARRPRLGLSRRRPRPAGGPSGGRPWFLLGGDERERLWAELLRTVSPELILDHEVPSLPAFPGQEPRCGPEPTEVFTVGPKTFSWTPFPPDLWGPGRSYRLLHGAGGHLESPARSLPQRPAPDPCRAPRVEQQPSVEGAAALRSCPMCQKEFAPRLTQLDVDSHLAQCLAESTEDVTW.

Over residues 1-17 (MEAARRPRLGLSRRRPR) the composition is skewed to basic residues. Disordered stretches follow at residues 1-28 (MEAARRPRLGLSRRRPRPAGGPSGGRPW) and 106-135 (GAGGHLESPARSLPQRPAPDPCRAPRVEQQ). Phosphoserine occurs at positions 113 and 137. Residues 144 to 180 (LRSCPMCQKEFAPRLTQLDVDSHLAQCLAESTEDVTW) form a UBZ2-type zinc finger. Zn(2+) is bound by residues C147, C150, H166, and C170.

As to quaternary structure, component of the Fanconi anemia (FA) complex. Interacts with FANCA; interaction is direct. Interacts with REV1. Reported to bind monoubiquitinated REV1; however it binds better to non-ubiquitinated REV1.

It is found in the nucleus. It localises to the chromosome. Functionally, component of the Fanconi anemia (FA) complex required to recruit the FA complex to DNA interstrand cross-links (ICLs) and promote ICLs repair. Following DNA damage recognizes and binds 'Lys-63'-linked ubiquitin generated by RNF8 at ICLs and recruits other components of the FA complex. Promotes translesion synthesis via interaction with REV1. This is Fanconi anemia core complex-associated protein 20 from Homo sapiens (Human).